A 3790-amino-acid polypeptide reads, in one-letter code: Transcription-associated protein 1 (3790 aa).

6 HEAT repeats span residues 98–136 (RQHV…HFRP), 335–381 (TDLR…HVRQ), 740–778 (DLLY…ELCL), 1185–1223 (AKAT…IQSK), 1332–1370 (IGYK…GVTL), and 1826–1864 (AIHK…AMPL). In terms of domain architecture, FAT spans 2610 to 3173 (LLAYLGKSHN…YFPIRTLYLT (564 aa)). One can recognise a PI3K/PI4K catalytic domain in the interval 3429-3753 (MPRVEIVQKN…AVDIIMTRFN (325 aa)). Residues 3435 to 3441 (VQKNNTA) form a G-loop region. The catalytic loop stretch occupies residues 3616–3624 (NLTRLNADM). Positions 3636–3661 (ISYFKFDVNDDKCQLNQHRPVPFRLT) are activation loop. One can recognise an FATC domain in the interval 3758-3790 (FDSIENKKISVLVQSATNIDNLCRMDPAWHPWL).

The protein belongs to the PI3/PI4-kinase family. TRA1 subfamily. Component of the Tip60 chromatin-remodeling complex which contains the catalytic subunit Tip60 and the subunits Domino, Tra1, Brd8, E(Pc), DMAP1, Pontin, Reptin, Ing3, Act87E, BAP55, Mrg15, MrgBP, Gas41 and YL-1. Probable component of some SAGA complex. Interacts with Spt3, Gcn5, Ada3 and Ada2b. As to expression, ubiquitous.

The protein localises to the nucleus. It localises to the cytoplasm. It is found in the chromosome. Functionally, part of the Tip60 chromatin-remodeling complex which is involved in DNA repair. Upon induction of DNA double-strand breaks, this complex acetylates phosphorylated H2AV in nucleosomes and exchanges it with unmodified H2AV. During wing development, required for activity of Notch and its coactivator mam. Function in promoting mam function is likely to involve both the Tip60 and SAGA complexes. The chain is Transcription-associated protein 1 (Nipped-A) from Drosophila melanogaster (Fruit fly).